The primary structure comprises 132 residues: NAD(P)H-quinone oxidoreductase subunit 3 (132 aa).

The next 3 membrane-spanning stretches (helical) occupy residues 22 to 42 (FLGF…ASAL), 76 to 96 (MFAL…PWAV), and 101 to 121 (LGLL…VALV).

Belongs to the complex I subunit 3 family. As to quaternary structure, NDH-1 can be composed of about 15 different subunits; different subcomplexes with different compositions have been identified which probably have different functions.

Its subcellular location is the cellular thylakoid membrane. It catalyses the reaction a plastoquinone + NADH + (n+1) H(+)(in) = a plastoquinol + NAD(+) + n H(+)(out). It carries out the reaction a plastoquinone + NADPH + (n+1) H(+)(in) = a plastoquinol + NADP(+) + n H(+)(out). NDH-1 shuttles electrons from an unknown electron donor, via FMN and iron-sulfur (Fe-S) centers, to quinones in the respiratory and/or the photosynthetic chain. The immediate electron acceptor for the enzyme in this species is believed to be plastoquinone. Couples the redox reaction to proton translocation, and thus conserves the redox energy in a proton gradient. Cyanobacterial NDH-1 also plays a role in inorganic carbon-concentration. This is NAD(P)H-quinone oxidoreductase subunit 3 (ndhC) from Thermosynechococcus vestitus (strain NIES-2133 / IAM M-273 / BP-1).